Consider the following 173-residue polypeptide: Protein Rv3753c (173 aa).

This is Protein Rv3753c from Mycobacterium tuberculosis (strain ATCC 25618 / H37Rv).